Consider the following 567-residue polypeptide: Glucose-6-phosphate isomerase, cytosolic A (567 aa).

Residues 156–157 (GS), 212–217 (SKTFTT), Gln356, Glu360, His391, and Lys516 contribute to the D-glucose 6-phosphate site. The Proton donor role is filled by Glu360. Active-site residues include His391 and Lys516.

Belongs to the GPI family. Homodimer.

The protein localises to the cytoplasm. It carries out the reaction alpha-D-glucose 6-phosphate = beta-D-fructose 6-phosphate. It participates in carbohydrate degradation; glycolysis; D-glyceraldehyde 3-phosphate and glycerone phosphate from D-glucose: step 2/4. Catalyzes the conversion of glucose-6-phosphate to fructose-6-phosphate, the second step in glycolysis, and the reverse reaction during gluconeogenesis. This Oryza sativa subsp. japonica (Rice) protein is Glucose-6-phosphate isomerase, cytosolic A.